Here is a 1340-residue protein sequence, read N- to C-terminus: Pleckstrin homology domain-containing family G member 2 (1340 aa).

Over residues threonine 34–alanine 44 the composition is skewed to polar residues. Positions threonine 34–leucine 76 are disordered. A compositionally biased stretch (low complexity) spans serine 45 to glycine 62. Residues arginine 98–methionine 279 form the DH domain. Residues glutamate 309 to phenylalanine 407 form the PH domain. Disordered stretches follow at residues proline 431–isoleucine 623, leucine 684–glycine 743, methionine 820–proline 855, asparagine 907–glycine 979, threonine 991–aspartate 1028, proline 1047–phenylalanine 1069, and proline 1125–aspartate 1146. The residue at position 441 (threonine 441) is a Phosphothreonine. 2 positions are modified to phosphoserine: serine 446 and serine 465. Positions aspartate 560–valine 572 are enriched in basic and acidic residues. Residues serine 588–glutamate 600 are compositionally biased toward acidic residues. Composition is skewed to polar residues over residues serine 703–proline 714, methionine 820–alanine 831, asparagine 907–serine 921, glycine 930–leucine 945, and proline 956–proline 972. The segment covering cysteine 1049–alanine 1059 has biased composition (polar residues). Residue threonine 1215 is modified to Phosphothreonine. Residues serine 1219 and serine 1269 each carry the phosphoserine modification. The segment at arginine 1250–serine 1340 is disordered. Positions proline 1276–proline 1288 are enriched in pro residues. Low complexity predominate over residues histidine 1319–proline 1333.

As to expression, expressed in thymus, skeletal muscle, lung, testis, uterus, pancreas and heart and also expressed during embryogenesis.

Its function is as follows. May be a transforming oncogene with exchange activity for CDC42. May be a guanine-nucleotide exchange factor (GEF) for RAC1 and CDC42. Activated by the binding to subunits beta and gamma of the heterotrimeric guanine nucleotide-binding protein (G protein). Involved in the regulation of actin polymerization. The polypeptide is Pleckstrin homology domain-containing family G member 2 (Plekhg2) (Mus musculus (Mouse)).